We begin with the raw amino-acid sequence, 319 residues long: Acetyl-coenzyme A carboxylase carboxyl transferase subunit alpha (319 aa).

Residues 38–293 form the CoA carboxyltransferase C-terminal domain; the sequence is HALQDKLRLR…KAVLLNELDA (256 aa).

Belongs to the AccA family. In terms of assembly, acetyl-CoA carboxylase is a heterohexamer composed of biotin carboxyl carrier protein (AccB), biotin carboxylase (AccC) and two subunits each of ACCase subunit alpha (AccA) and ACCase subunit beta (AccD).

The protein localises to the cytoplasm. The enzyme catalyses N(6)-carboxybiotinyl-L-lysyl-[protein] + acetyl-CoA = N(6)-biotinyl-L-lysyl-[protein] + malonyl-CoA. The protein operates within lipid metabolism; malonyl-CoA biosynthesis; malonyl-CoA from acetyl-CoA: step 1/1. In terms of biological role, component of the acetyl coenzyme A carboxylase (ACC) complex. First, biotin carboxylase catalyzes the carboxylation of biotin on its carrier protein (BCCP) and then the CO(2) group is transferred by the carboxyltransferase to acetyl-CoA to form malonyl-CoA. The chain is Acetyl-coenzyme A carboxylase carboxyl transferase subunit alpha from Stenotrophomonas maltophilia (strain R551-3).